Consider the following 176-residue polypeptide: Probable fimbrial subunit LpfE (176 aa).

Positions 1–23 are cleaved as a signal peptide; sequence MKFKRLLHSGIASLSLVACGVNA.

This sequence belongs to the fimbrial protein family.

The protein localises to the fimbrium. Functionally, part of the lpfABCC'DE fimbrial operon. LP fimbriae may participate in the interaction with eukaryotic cells by assisting in microcolony formation. The sequence is that of Probable fimbrial subunit LpfE (lpfE) from Escherichia coli O157:H7.